The following is a 146-amino-acid chain: Large ribosomal subunit protein uL13 (146 aa).

It belongs to the universal ribosomal protein uL13 family. Part of the 50S ribosomal subunit.

In terms of biological role, this protein is one of the early assembly proteins of the 50S ribosomal subunit, although it is not seen to bind rRNA by itself. It is important during the early stages of 50S assembly. The sequence is that of Large ribosomal subunit protein uL13 from Bdellovibrio bacteriovorus (strain ATCC 15356 / DSM 50701 / NCIMB 9529 / HD100).